A 264-amino-acid chain; its full sequence is SPRY domain-containing SOCS box protein 2 (264 aa).

Residues methionine 1–leucine 19 show a composition bias toward polar residues. The tract at residues methionine 1–serine 34 is disordered. A B30.2/SPRY domain is found at proline 26–arginine 221. An SOCS box domain is found at valine 222–lysine 264.

The protein belongs to the SPSB family. Component of the probable ECS(SPSB2) E3 ubiquitin-protein ligase complex which contains CUL5, RNF7/RBX2, Elongin BC complex and SPSB2. Interacts with CUL5, RNF7, ELOB and ELOC. Interacts with MET. Interacts (via B30.2/SPRY domain) with PAWR; this interaction occurs in association with the Elongin BC complex. Interacts with NOS2.

The protein resides in the cytoplasm. Its subcellular location is the cytosol. It participates in protein modification; protein ubiquitination. Its function is as follows. Substrate recognition component of a SCF-like ECS (Elongin BC-CUL2/5-SOCS-box protein) E3 ubiquitin-protein ligase complex which mediates the ubiquitination and subsequent proteasomal degradation of target proteins. Negatively regulates nitric oxide (NO) production and limits cellular toxicity in activated macrophages by mediating the ubiquitination and proteasomal degradation of NOS2. Acts as a bridge which links NOS2 with the ECS E3 ubiquitin ligase complex components ELOC and CUL5. The chain is SPRY domain-containing SOCS box protein 2 (Spsb2) from Mus musculus (Mouse).